Consider the following 62-residue polypeptide: Coiled-coil domain-containing protein YLR146W-A (62 aa).

Residues 14 to 49 adopt a coiled-coil conformation; that stretch reads EHARMLQNEIQQLFAQLRDTNSQIRCDLNEFEQIKE.

The sequence is that of Coiled-coil domain-containing protein YLR146W-A from Saccharomyces cerevisiae (strain ATCC 204508 / S288c) (Baker's yeast).